We begin with the raw amino-acid sequence, 490 residues long: Cytochrome P450 2C50 (490 aa).

Ser-127 carries the phosphoserine modification. Residues Lys-249 and Lys-375 each carry the N6-acetyllysine modification. A heme-binding site is contributed by Cys-435.

It belongs to the cytochrome P450 family. It depends on heme as a cofactor. In terms of tissue distribution, expressed in heart and liver.

Its subcellular location is the endoplasmic reticulum membrane. It is found in the microsome membrane. The enzyme catalyses an organic molecule + reduced [NADPH--hemoprotein reductase] + O2 = an alcohol + oxidized [NADPH--hemoprotein reductase] + H2O + H(+). Metabolizes arachidonic acid to several midchain and omega-terminal hydroxyeicosatetraenoic acids (HETE). The polypeptide is Cytochrome P450 2C50 (Mus musculus (Mouse)).